The sequence spans 142 residues: Lysozyme 2 (142 aa).

The N-terminal stretch at 1–20 (MLKLTLTILAAVLLVTPAFG) is a signal peptide. Residues 21–142 (KVYTRCSLAR…HTLPSIDDCF (122 aa)) enclose the C-type lysozyme domain. 4 disulfide bridges follow: cysteine 26/cysteine 141, cysteine 47/cysteine 131, cysteine 82/cysteine 98, and cysteine 94/cysteine 112. Glutamate 52 is an active-site residue. An N-linked (GlcNAc...) asparagine glycan is attached at asparagine 66. Aspartate 70 is an active-site residue.

This sequence belongs to the glycosyl hydrolase 22 family. Expressed only in the midgut where it is concentrated around the middle in all larval stages.

It is found in the secreted. The catalysed reaction is Hydrolysis of (1-&gt;4)-beta-linkages between N-acetylmuramic acid and N-acetyl-D-glucosamine residues in a peptidoglycan and between N-acetyl-D-glucosamine residues in chitodextrins.. Lysozymes have primarily a bacteriolytic function. Shows antibacterial activity against Gram-positive bacterium M.luteus but shows no activity against Gram-negative bacterium E.coli. Likely to play a role in the eradication of ingested pathogens during their passage through the intestine. The sequence is that of Lysozyme 2 from Lucilia sericata (Green bottle fly).